Here is a 467-residue protein sequence, read N- to C-terminus: ATP synthase subunit beta (467 aa).

Position 156-163 (156-163 (GGAGVGKT)) interacts with ATP.

Belongs to the ATPase alpha/beta chains family. As to quaternary structure, F-type ATPases have 2 components, CF(1) - the catalytic core - and CF(0) - the membrane proton channel. CF(1) has five subunits: alpha(3), beta(3), gamma(1), delta(1), epsilon(1). CF(0) has three main subunits: a(1), b(2) and c(9-12). The alpha and beta chains form an alternating ring which encloses part of the gamma chain. CF(1) is attached to CF(0) by a central stalk formed by the gamma and epsilon chains, while a peripheral stalk is formed by the delta and b chains.

The protein resides in the cell inner membrane. The enzyme catalyses ATP + H2O + 4 H(+)(in) = ADP + phosphate + 5 H(+)(out). In terms of biological role, produces ATP from ADP in the presence of a proton gradient across the membrane. The catalytic sites are hosted primarily by the beta subunits. In Ralstonia nicotianae (strain ATCC BAA-1114 / GMI1000) (Ralstonia solanacearum), this protein is ATP synthase subunit beta.